Consider the following 299-residue polypeptide: Coenzyme PQQ synthesis protein B (299 aa).

This sequence belongs to the PqqB family.

It functions in the pathway cofactor biosynthesis; pyrroloquinoline quinone biosynthesis. In terms of biological role, may be involved in the transport of PQQ or its precursor to the periplasm. The chain is Coenzyme PQQ synthesis protein B from Methylorubrum extorquens (strain CM4 / NCIMB 13688) (Methylobacterium extorquens).